Reading from the N-terminus, the 124-residue chain is Putative iron-sulfur cluster insertion protein ErpA 2 (124 aa).

Residues cysteine 52, cysteine 116, and cysteine 118 each coordinate iron-sulfur cluster.

It belongs to the HesB/IscA family. In terms of assembly, homodimer. Iron-sulfur cluster is required as a cofactor.

Required for insertion of 4Fe-4S clusters. The chain is Putative iron-sulfur cluster insertion protein ErpA 2 from Burkholderia vietnamiensis (strain G4 / LMG 22486) (Burkholderia cepacia (strain R1808)).